The primary structure comprises 336 residues: Holliday junction branch migration complex subunit RuvB (336 aa).

A large ATPase domain (RuvB-L) region spans residues methionine 1 to tyrosine 183. Residues leucine 22, arginine 23, glycine 64, lysine 67, threonine 68, threonine 69, glutamate 130 to phenylalanine 132, arginine 173, tyrosine 183, and arginine 220 each bind ATP. Threonine 68 serves as a coordination point for Mg(2+). Positions glutamine 184–glutamine 254 are small ATPAse domain (RuvB-S). The head domain (RuvB-H) stretch occupies residues alanine 257–phenylalanine 336. 2 residues coordinate DNA: arginine 312 and arginine 317.

This sequence belongs to the RuvB family. As to quaternary structure, homohexamer. Forms an RuvA(8)-RuvB(12)-Holliday junction (HJ) complex. HJ DNA is sandwiched between 2 RuvA tetramers; dsDNA enters through RuvA and exits via RuvB. An RuvB hexamer assembles on each DNA strand where it exits the tetramer. Each RuvB hexamer is contacted by two RuvA subunits (via domain III) on 2 adjacent RuvB subunits; this complex drives branch migration. In the full resolvosome a probable DNA-RuvA(4)-RuvB(12)-RuvC(2) complex forms which resolves the HJ.

It localises to the cytoplasm. The catalysed reaction is ATP + H2O = ADP + phosphate + H(+). Functionally, the RuvA-RuvB-RuvC complex processes Holliday junction (HJ) DNA during genetic recombination and DNA repair, while the RuvA-RuvB complex plays an important role in the rescue of blocked DNA replication forks via replication fork reversal (RFR). RuvA specifically binds to HJ cruciform DNA, conferring on it an open structure. The RuvB hexamer acts as an ATP-dependent pump, pulling dsDNA into and through the RuvAB complex. RuvB forms 2 homohexamers on either side of HJ DNA bound by 1 or 2 RuvA tetramers; 4 subunits per hexamer contact DNA at a time. Coordinated motions by a converter formed by DNA-disengaged RuvB subunits stimulates ATP hydrolysis and nucleotide exchange. Immobilization of the converter enables RuvB to convert the ATP-contained energy into a lever motion, pulling 2 nucleotides of DNA out of the RuvA tetramer per ATP hydrolyzed, thus driving DNA branch migration. The RuvB motors rotate together with the DNA substrate, which together with the progressing nucleotide cycle form the mechanistic basis for DNA recombination by continuous HJ branch migration. Branch migration allows RuvC to scan DNA until it finds its consensus sequence, where it cleaves and resolves cruciform DNA. The protein is Holliday junction branch migration complex subunit RuvB of Moorella thermoacetica (strain ATCC 39073 / JCM 9320).